Reading from the N-terminus, the 103-residue chain is Phosphoribosyl-ATP pyrophosphatase (103 aa).

Belongs to the PRA-PH family.

It localises to the cytoplasm. It carries out the reaction 1-(5-phospho-beta-D-ribosyl)-ATP + H2O = 1-(5-phospho-beta-D-ribosyl)-5'-AMP + diphosphate + H(+). The protein operates within amino-acid biosynthesis; L-histidine biosynthesis; L-histidine from 5-phospho-alpha-D-ribose 1-diphosphate: step 2/9. This chain is Phosphoribosyl-ATP pyrophosphatase (hisE), found in Rhodobacter capsulatus (strain ATCC BAA-309 / NBRC 16581 / SB1003).